A 179-amino-acid polypeptide reads, in one-letter code: Large ribosomal subunit protein uL5 (179 aa).

It belongs to the universal ribosomal protein uL5 family. Part of the 50S ribosomal subunit; part of the 5S rRNA/L5/L18/L25 subcomplex. Contacts the 5S rRNA and the P site tRNA. Forms a bridge to the 30S subunit in the 70S ribosome.

In terms of biological role, this is one of the proteins that bind and probably mediate the attachment of the 5S RNA into the large ribosomal subunit, where it forms part of the central protuberance. In the 70S ribosome it contacts protein S13 of the 30S subunit (bridge B1b), connecting the 2 subunits; this bridge is implicated in subunit movement. Contacts the P site tRNA; the 5S rRNA and some of its associated proteins might help stabilize positioning of ribosome-bound tRNAs. The protein is Large ribosomal subunit protein uL5 of Dictyoglomus thermophilum (strain ATCC 35947 / DSM 3960 / H-6-12).